The sequence spans 94 residues: Aspartyl/glutamyl-tRNA(Asn/Gln) amidotransferase subunit C (94 aa).

The protein belongs to the GatC family. Heterotrimer of A, B and C subunits.

The catalysed reaction is L-glutamyl-tRNA(Gln) + L-glutamine + ATP + H2O = L-glutaminyl-tRNA(Gln) + L-glutamate + ADP + phosphate + H(+). It catalyses the reaction L-aspartyl-tRNA(Asn) + L-glutamine + ATP + H2O = L-asparaginyl-tRNA(Asn) + L-glutamate + ADP + phosphate + 2 H(+). Allows the formation of correctly charged Asn-tRNA(Asn) or Gln-tRNA(Gln) through the transamidation of misacylated Asp-tRNA(Asn) or Glu-tRNA(Gln) in organisms which lack either or both of asparaginyl-tRNA or glutaminyl-tRNA synthetases. The reaction takes place in the presence of glutamine and ATP through an activated phospho-Asp-tRNA(Asn) or phospho-Glu-tRNA(Gln). The protein is Aspartyl/glutamyl-tRNA(Asn/Gln) amidotransferase subunit C of Desulfatibacillum aliphaticivorans.